We begin with the raw amino-acid sequence, 285 residues long: MRIDGHTRLAAVVASPIKHSISPFIHNLAFEKTHVNGVYVAWEIPESDLAETVENIRRYNMFGINLSMPYKEKVIPFLDGLSPEAQLIGAVNTVVNRDGRLIGHNTDGFGFFASLKNFNPKDTHIMILGAGGAAKSIVTQAVLDGAKKVSIYVRPQSLVKAKENFRTLLDQTDCYLEFHDLTDADHFQKELRQTDLLVNATSVGMDGESLPISIDTRFPKELLVADIIYQPFETPFLALARKQEIEAVNGLGMLLYQAAGAFKLWTGENMPTGAIWQELENIYNS.

Residues 20-22 and serine 67 contribute to the shikimate site; that span reads SIS. Residue lysine 71 is the Proton acceptor of the active site. Residues asparagine 92 and aspartate 107 each contribute to the shikimate site. Residues 129–133 and isoleucine 227 each bind NADP(+); that span reads GAGGA. Residue tyrosine 229 coordinates shikimate. Glycine 250 is an NADP(+) binding site.

This sequence belongs to the shikimate dehydrogenase family. As to quaternary structure, homodimer.

It catalyses the reaction shikimate + NADP(+) = 3-dehydroshikimate + NADPH + H(+). It participates in metabolic intermediate biosynthesis; chorismate biosynthesis; chorismate from D-erythrose 4-phosphate and phosphoenolpyruvate: step 4/7. Involved in the biosynthesis of the chorismate, which leads to the biosynthesis of aromatic amino acids. Catalyzes the reversible NADPH linked reduction of 3-dehydroshikimate (DHSA) to yield shikimate (SA). The chain is Shikimate dehydrogenase (NADP(+)) from Streptococcus thermophilus (strain ATCC BAA-491 / LMD-9).